Reading from the N-terminus, the 320-residue chain is D-alanine--D-alanine ligase (320 aa).

The 217-residue stretch at 101–317 folds into the ATP-grasp domain; it reads KMIFQGAGLP…FSELVCKILS (217 aa). 148-203 lines the ATP pocket; that stretch reads INQLGLPLIVKPSREGSSFGMTKVEHLDQLDDALKKAWHYDEEILVEKWHFGTELT. Mg(2+) is bound by residues aspartate 271, glutamate 284, and asparagine 286.

It belongs to the D-alanine--D-alanine ligase family. It depends on Mg(2+) as a cofactor. Requires Mn(2+) as cofactor.

The protein resides in the cytoplasm. It carries out the reaction 2 D-alanine + ATP = D-alanyl-D-alanine + ADP + phosphate + H(+). It participates in cell wall biogenesis; peptidoglycan biosynthesis. In terms of biological role, cell wall formation. The protein is D-alanine--D-alanine ligase of Hamiltonella defensa subsp. Acyrthosiphon pisum (strain 5AT).